Here is a 925-residue protein sequence, read N- to C-terminus: Protein PDC2 (925 aa).

The region spanning D63–V138 is the HTH CENPB-type domain. 3 disordered regions span residues D510 to S596, N674 to A693, and P904 to F925. Residues Q513–E537 are compositionally biased toward polar residues. Residues N538–S563 are compositionally biased toward low complexity. A compositionally biased stretch (polar residues) spans K565–S596. Positions N674–D686 are enriched in basic and acidic residues. Positions P904–L916 are enriched in polar residues.

Essential for the synthesis of pyruvate decarboxylase. May be important for a high basal level of PDC gene expression or play a positive role in the autoregulation control of PDC1 and PDC5. The protein is Protein PDC2 (PDC2) of Saccharomyces cerevisiae (strain ATCC 204508 / S288c) (Baker's yeast).